The primary structure comprises 347 residues: UDP-N-acetylenolpyruvoylglucosamine reductase (347 aa).

The FAD-binding PCMH-type domain occupies 16-187; the sequence is AIEQCSHYLV…IAVGLKLPKT (172 aa). The active site involves arginine 163. Serine 233 (proton donor) is an active-site residue. The active site involves glutamate 328.

Belongs to the MurB family. It depends on FAD as a cofactor.

It localises to the cytoplasm. The catalysed reaction is UDP-N-acetyl-alpha-D-muramate + NADP(+) = UDP-N-acetyl-3-O-(1-carboxyvinyl)-alpha-D-glucosamine + NADPH + H(+). It functions in the pathway cell wall biogenesis; peptidoglycan biosynthesis. In terms of biological role, cell wall formation. The polypeptide is UDP-N-acetylenolpyruvoylglucosamine reductase (Vibrio vulnificus (strain YJ016)).